The following is a 139-amino-acid chain: Oocyte zinc finger protein XlCOF14 (139 aa).

5 consecutive C2H2-type zinc fingers follow at residues Phe-6–His-28, Phe-33–His-55, His-61–His-83, Phe-89–His-111, and Phe-117–His-139.

The protein belongs to the krueppel C2H2-type zinc-finger protein family.

The protein resides in the nucleus. May be involved in transcriptional regulation. The polypeptide is Oocyte zinc finger protein XlCOF14 (Xenopus laevis (African clawed frog)).